The sequence spans 172 residues: ATP synthase subunit b (172 aa).

A helical membrane pass occupies residues 13 to 33 (GINGGDILFQLVMFLILLALL).

The protein belongs to the ATPase B chain family. F-type ATPases have 2 components, F(1) - the catalytic core - and F(0) - the membrane proton channel. F(1) has five subunits: alpha(3), beta(3), gamma(1), delta(1), epsilon(1). F(0) has three main subunits: a(1), b(2) and c(10-14). The alpha and beta chains form an alternating ring which encloses part of the gamma chain. F(1) is attached to F(0) by a central stalk formed by the gamma and epsilon chains, while a peripheral stalk is formed by the delta and b chains.

It localises to the cell membrane. Its function is as follows. F(1)F(0) ATP synthase produces ATP from ADP in the presence of a proton or sodium gradient. F-type ATPases consist of two structural domains, F(1) containing the extramembraneous catalytic core and F(0) containing the membrane proton channel, linked together by a central stalk and a peripheral stalk. During catalysis, ATP synthesis in the catalytic domain of F(1) is coupled via a rotary mechanism of the central stalk subunits to proton translocation. Component of the F(0) channel, it forms part of the peripheral stalk, linking F(1) to F(0). The protein is ATP synthase subunit b of Priestia megaterium (strain ATCC 12872 / QMB1551) (Bacillus megaterium).